The chain runs to 262 residues: Type III pantothenate kinase (262 aa).

12–19 lines the ATP pocket; the sequence is DIGNTSIA. Residues Tyr-94 and 109 to 112 each bind substrate; that span reads GSDV. Asp-111 acts as the Proton acceptor in catalysis. Asp-132 lines the K(+) pocket. Thr-135 lines the ATP pocket. Thr-187 contacts substrate.

This sequence belongs to the type III pantothenate kinase family. Homodimer. NH4(+) serves as cofactor. The cofactor is K(+).

It is found in the cytoplasm. The catalysed reaction is (R)-pantothenate + ATP = (R)-4'-phosphopantothenate + ADP + H(+). Its pathway is cofactor biosynthesis; coenzyme A biosynthesis; CoA from (R)-pantothenate: step 1/5. In terms of biological role, catalyzes the phosphorylation of pantothenate (Pan), the first step in CoA biosynthesis. The chain is Type III pantothenate kinase from Borreliella burgdorferi (strain ATCC 35210 / DSM 4680 / CIP 102532 / B31) (Borrelia burgdorferi).